A 216-amino-acid chain; its full sequence is Probable transaldolase (216 aa).

Lysine 85 functions as the Schiff-base intermediate with substrate in the catalytic mechanism.

It belongs to the transaldolase family. Type 3B subfamily.

It is found in the cytoplasm. It catalyses the reaction D-sedoheptulose 7-phosphate + D-glyceraldehyde 3-phosphate = D-erythrose 4-phosphate + beta-D-fructose 6-phosphate. The protein operates within carbohydrate degradation; pentose phosphate pathway; D-glyceraldehyde 3-phosphate and beta-D-fructose 6-phosphate from D-ribose 5-phosphate and D-xylulose 5-phosphate (non-oxidative stage): step 2/3. Transaldolase is important for the balance of metabolites in the pentose-phosphate pathway. The chain is Probable transaldolase from Dehalococcoides mccartyi (strain ATCC BAA-2266 / KCTC 15142 / 195) (Dehalococcoides ethenogenes (strain 195)).